The sequence spans 122 residues: ATP-dependent Clp protease adapter protein ClpS (122 aa).

The disordered stretch occupies residues 1-27 (MVRMATKPPSMTPTPPTGAPPRDDGGS). A compositionally biased stretch (pro residues) spans 10-19 (SMTPTPPTGA).

It belongs to the ClpS family. Binds to the N-terminal domain of the chaperone ClpA.

Functionally, involved in the modulation of the specificity of the ClpAP-mediated ATP-dependent protein degradation. This is ATP-dependent Clp protease adapter protein ClpS from Paracidovorax citrulli (strain AAC00-1) (Acidovorax citrulli).